The primary structure comprises 82 residues: MVFLLCFFLVADVSYGINKDCLLPMDVGRCRASHPRYYYNSSSKRCEKFIYGGCRGNANNFHTLEECEKVCGVRSRDSPKEN.

The first 16 residues, 1 to 16, serve as a signal peptide directing secretion; it reads MVFLLCFFLVADVSYG. Positions 21–71 constitute a BPTI/Kunitz inhibitor domain; it reads CLLPMDVGRCRASHPRYYYNSSSKRCEKFIYGGCRGNANNFHTLEECEKVC. 3 disulfides stabilise this stretch: Cys-21-Cys-71, Cys-30-Cys-54, and Cys-46-Cys-67. Positions 75–82 are excised as a propeptide; it reads SRDSPKEN.

The protein belongs to the venom Kunitz-type family. Sea anemone type 2 potassium channel toxin subfamily.

The protein localises to the secreted. It localises to the nematocyst. In terms of biological role, dual-function toxin that inhibits both the serine protease trypsin (Kd=30 nM) and voltage-gated potassium channels Kv1.2/KCNA2 (IC(50)=2800 nM). This chain is U-actitoxin-Avd3f, found in Anemonia viridis (Snakelocks anemone).